Consider the following 475-residue polypeptide: F-box protein SKIP22 (475 aa).

The segment at 114-133 (DQAKSNPNTSVEDPEGDISG) is disordered. The F-box domain maps to 319–365 (PPCLMRLPTELKLKILELLPGVSIGNMACVCTEMRYLASDNDLWKQK).

Part of a SCF (ASK-cullin-F-box) protein ligase complex. Interacts with SKP1A/ASK1 and SPK1B/ASK2.

It is found in the nucleus. It participates in protein modification; protein ubiquitination. In terms of biological role, component of SCF(ASK-cullin-F-box) E3 ubiquitin ligase complexes, which may mediate the ubiquitination and subsequent proteasomal degradation of target proteins. This Arabidopsis thaliana (Mouse-ear cress) protein is F-box protein SKIP22 (SKIP22).